Reading from the N-terminus, the 446-residue chain is Corrinoid/iron-sulfur protein large subunit (446 aa).

The 58-residue stretch at 2 to 59 (PLTGLEIYKQLPKKNCGECGTPTCLAFAMNLASGKASLDSCPYVSDAAREALDAAAAP) folds into the 4Fe-4S domain. Positions 17, 20, 25, and 42 each coordinate [4Fe-4S] cluster. 5-methoxybenzimidazolylcob(I)amide is bound by residues Thr340, Thr346, 370–373 (GLSV), and Ala433.

As to quaternary structure, heterohexamer composed of 2 subunits of AcsC, 2 subunits of AcsD and 2 subunits of AcsE. Requires [4Fe-4S] cluster as cofactor.

In terms of biological role, acts as a methyl group carrier in the anaerobic acetyl-CoA pathway (Wood-Ljungdahl pathway) of carbon monoxide and carbon dioxide fixation. Binds the corrinoid 5-methoxybenzimidazolylcobamide which is then methylated by the AcsE subunit. In Moorella thermoacetica (Clostridium thermoaceticum), this protein is Corrinoid/iron-sulfur protein large subunit (acsC).